We begin with the raw amino-acid sequence, 171 residues long: Lipoprotein signal peptidase (171 aa).

Helical transmembrane passes span 8 to 28, 64 to 84, and 99 to 119; these read SFLWLSAVAFVIDLLTKYIVV, WQQYFFILLALAISGMLVYFL, and ALIIGGALANMVDRAYNGFVV. Residues D120 and D138 contribute to the active site. Residues 133-153 form a helical membrane-spanning segment; the sequence is VFNIADIAICIGAGLLVLDAF.

The protein belongs to the peptidase A8 family.

It localises to the cell inner membrane. It carries out the reaction Release of signal peptides from bacterial membrane prolipoproteins. Hydrolyzes -Xaa-Yaa-Zaa-|-(S,diacylglyceryl)Cys-, in which Xaa is hydrophobic (preferably Leu), and Yaa (Ala or Ser) and Zaa (Gly or Ala) have small, neutral side chains.. Its pathway is protein modification; lipoprotein biosynthesis (signal peptide cleavage). Its function is as follows. This protein specifically catalyzes the removal of signal peptides from prolipoproteins. This chain is Lipoprotein signal peptidase, found in Haemophilus influenzae (strain ATCC 51907 / DSM 11121 / KW20 / Rd).